The chain runs to 322 residues: uncharacterized protein (322 aa).

A run of 9 helical transmembrane segments spans residues 5 to 25 (LISIIGIPALAFAISTYIPGI), 37 to 57 (IGPSILAPGFWAFFKFLFKET), 71 to 91 (LPLLSIVVLWALLSITSLTSF), 109 to 129 (MMYVILGSLAFSIMGWKMPFI), 153 to 173 (SFKMITIGSFPFYLATFLPFV), 189 to 209 (LFSLAGIFGAACYFIGYVIMI), 245 to 265 (LLLIALGSLFATLYLGIAPDI), 268 to 288 (PITIVENFAIALIFPILATFV), and 300 to 320 (IYPISYVATLIGVIGFIFALL).

Its subcellular location is the cell membrane. This is an uncharacterized protein from Methanocaldococcus jannaschii (strain ATCC 43067 / DSM 2661 / JAL-1 / JCM 10045 / NBRC 100440) (Methanococcus jannaschii).